Reading from the N-terminus, the 394-residue chain is Chalcone synthase 2 (394 aa).

Cys167 is a catalytic residue.

The protein belongs to the thiolase-like superfamily. Chalcone/stilbene synthases family.

The enzyme catalyses (E)-4-coumaroyl-CoA + 3 malonyl-CoA + 3 H(+) = 2',4,4',6'-tetrahydroxychalcone + 3 CO2 + 4 CoA. It functions in the pathway secondary metabolite biosynthesis; flavonoid biosynthesis. Its function is as follows. The primary product of this enzyme is 4,2',4',6'-tetrahydroxychalcone (also termed naringenin-chalcone or chalcone) which can under specific conditions spontaneously isomerize into naringenin. This chain is Chalcone synthase 2 (CHS2), found in Secale cereale (Rye).